A 218-amino-acid polypeptide reads, in one-letter code: Phosphoglycolate phosphatase (218 aa).

Aspartate 7 serves as the catalytic Nucleophile. Positions 7, 9, and 167 each coordinate Mg(2+).

The protein belongs to the HAD-like hydrolase superfamily. CbbY/CbbZ/Gph/YieH family. Mg(2+) is required as a cofactor.

It catalyses the reaction 2-phosphoglycolate + H2O = glycolate + phosphate. The protein operates within organic acid metabolism; glycolate biosynthesis; glycolate from 2-phosphoglycolate: step 1/1. Its function is as follows. Specifically catalyzes the dephosphorylation of 2-phosphoglycolate. Is involved in the dissimilation of the intracellular 2-phosphoglycolate formed during the DNA repair of 3'-phosphoglycolate ends, a major class of DNA lesions induced by oxidative stress. This Cereibacter sphaeroides (strain ATCC 17025 / ATH 2.4.3) (Rhodobacter sphaeroides) protein is Phosphoglycolate phosphatase.